The chain runs to 93 residues: Sec-independent protein translocase protein TatA (93 aa).

The helical transmembrane segment at 1-21 (MGAMSPWHWAIVALVVVILFG) threads the bilayer. Residues 44-93 (KEMQNDNSTPAPTAQQSAPAELPVADTTTAPVTPPAPVQPQPQHTEPKSA) are disordered. A compositionally biased stretch (low complexity) spans 51–74 (STPAPTAQQSAPAELPVADTTTAP).

The protein belongs to the TatA/E family. In terms of assembly, the Tat system comprises two distinct complexes: a TatABC complex, containing multiple copies of TatA, TatB and TatC subunits, and a separate TatA complex, containing only TatA subunits. Substrates initially bind to the TatABC complex, which probably triggers association of the separate TatA complex to form the active translocon.

The protein resides in the cell membrane. In terms of biological role, part of the twin-arginine translocation (Tat) system that transports large folded proteins containing a characteristic twin-arginine motif in their signal peptide across membranes. TatA could form the protein-conducting channel of the Tat system. This Rhodococcus opacus (strain B4) protein is Sec-independent protein translocase protein TatA.